The primary structure comprises 114 residues: MTIVRIDAEARWSDVVIHNNTLYYTGVPENLDADAFEQTANTLAQIDAVLEKQGSNKSSILDATIFLADKNDFAAMNKAWDAWVVAGHAPVRCTVQAGLMNPKYKVEIKIVAAV.

The protein belongs to the RutC family.

This Escherichia coli O6:H1 (strain CFT073 / ATCC 700928 / UPEC) protein is RutC family protein YoaB (yoaB).